The primary structure comprises 234 residues: MTNQLIYKGKAKDIYSTKDENVIRTVYKDQATMLNGARKETIDGKGALNNQISSLIFEKLNKAGVVTHYIEQISKNEQLNKKVDIIPLEVVLRNVTAGSFSKRFGVEEGRVLETPIVEFYYKNDDLNDPFINDEHVKFLGIVNDEEIAYLKGETRRINELLKGWFAQIGLNLIDFKLEFGFDQEGTIILADEFSPDNCRLWDKNGNHMDKDVFRRDLGNLTDVYQVVLEKLIAL.

It belongs to the SAICAR synthetase family.

The enzyme catalyses 5-amino-1-(5-phospho-D-ribosyl)imidazole-4-carboxylate + L-aspartate + ATP = (2S)-2-[5-amino-1-(5-phospho-beta-D-ribosyl)imidazole-4-carboxamido]succinate + ADP + phosphate + 2 H(+). It functions in the pathway purine metabolism; IMP biosynthesis via de novo pathway; 5-amino-1-(5-phospho-D-ribosyl)imidazole-4-carboxamide from 5-amino-1-(5-phospho-D-ribosyl)imidazole-4-carboxylate: step 1/2. In Streptococcus pyogenes serotype M18 (strain MGAS8232), this protein is Phosphoribosylaminoimidazole-succinocarboxamide synthase.